We begin with the raw amino-acid sequence, 29 residues long: Pyridoxal 5'-phosphate synthase subunit PdxS (29 aa).

This sequence belongs to the PdxS/SNZ family. In the presence of PdxT, forms a dodecamer of heterodimers.

The catalysed reaction is aldehydo-D-ribose 5-phosphate + D-glyceraldehyde 3-phosphate + L-glutamine = pyridoxal 5'-phosphate + L-glutamate + phosphate + 3 H2O + H(+). It functions in the pathway cofactor biosynthesis; pyridoxal 5'-phosphate biosynthesis. Its function is as follows. Catalyzes the formation of pyridoxal 5'-phosphate from ribose 5-phosphate (RBP), glyceraldehyde 3-phosphate (G3P) and ammonia. The ammonia is provided by the PdxT subunit. Can also use ribulose 5-phosphate and dihydroxyacetone phosphate as substrates, resulting from enzyme-catalyzed isomerization of RBP and G3P, respectively. The sequence is that of Pyridoxal 5'-phosphate synthase subunit PdxS from Clostridium pasteurianum.